Reading from the N-terminus, the 155-residue chain is MSTIVIDYQTESIPDDWLYPAEWRIQRWLDCALTVLAIDEALEVTIRLVDNDEITELNAEYRGKNAPTNVLSFPCDWDLPEEPRLLGDIVIAVQIVNQEAKAQKKKMEQHWAHMTIHGLLHLLDYDHIEEKEAQIMEDLERTILAQLGFPDPYCA.

Zn(2+)-binding residues include H117, H121, and H127.

This sequence belongs to the endoribonuclease YbeY family. It depends on Zn(2+) as a cofactor.

It localises to the cytoplasm. In terms of biological role, single strand-specific metallo-endoribonuclease involved in late-stage 70S ribosome quality control and in maturation of the 3' terminus of the 16S rRNA. The polypeptide is Endoribonuclease YbeY (Dichelobacter nodosus (strain VCS1703A)).